The sequence spans 1052 residues: Fibroblast growth factor receptor homolog 2 (1052 aa).

Residues 1–19 (MAKVPITLVMIIAIVSAAA) form the signal peptide. Over 20–600 (DLGCDYGHHR…EIYALLHAHP (581 aa)) the chain is Extracellular. 3 Ig-like C2-type domains span residues 23–117 (CDYG…IASF), 124–230 (PALP…PTQL), and 240–340 (PMLK…RTVA). The cysteines at positions 30 and 90 are disulfide-linked. 6 N-linked (GlcNAc...) asparagine glycosylation sites follow: Asn-99, Asn-137, Asn-175, Asn-181, Asn-249, and Asn-257. Cys-164 and Cys-217 are joined by a disulfide. A disulfide bond links Cys-262 and Cys-329. The span at 358–372 (TTTTTVASPIPTAST) shows a compositional bias: low complexity. A disordered region spans residues 358 to 393 (TTTTTVASPIPTASTGEDNDDDVENPAAEASGGVGP). Ig-like C2-type domains lie at 393-478 (PPVF…FSVQ) and 487-585 (PIIV…RVVS). Residues Cys-416 and Cys-462 are joined by a disulfide bond. 9 N-linked (GlcNAc...) asparagine glycosylation sites follow: Asn-423, Asn-444, Asn-494, Asn-500, Asn-526, Asn-541, Asn-546, Asn-555, and Asn-576. The cysteines at positions 507 and 566 are disulfide-linked. Residues 601 to 626 (LGFTLAAITIVALFLLGSAFITFMLR) form a helical membrane-spanning segment. Residues 627–1052 (RLRREKLLKL…LRYQYTYKFN (426 aa)) lie on the Cytoplasmic side of the membrane. A Protein kinase domain is found at 712–1000 (LSLGSILGEG…ELVESFDGIL (289 aa)). ATP contacts are provided by residues 718 to 726 (LGEGAFGRV) and Lys-748. The Proton acceptor role is filled by Asp-864. A Phosphotyrosine; by autocatalysis modification is found at Tyr-895. The interval 1017–1038 (PMLETPPSSGDEDDGSDTETFR) is disordered.

It belongs to the protein kinase superfamily. Tyr protein kinase family. Fibroblast growth factor receptor subfamily. In terms of tissue distribution, during embryogenesis, expression is seen in mesoderm, endodermal precursor cells, CNS midline cells and trachea and salivary duct ectodermal cells.

The protein resides in the membrane. The enzyme catalyses L-tyrosyl-[protein] + ATP = O-phospho-L-tyrosyl-[protein] + ADP + H(+). In terms of biological role, may be required for patterning of muscle precursor cells: generation of mesodermal and endodermal layers, invaginations of various types of cells, and CNS formation. Essential for the ability of the migrating tracheal and midline cells to recognize external guiding cues. This is Fibroblast growth factor receptor homolog 2 (btl) from Drosophila melanogaster (Fruit fly).